The following is a 291-amino-acid chain: 2-C-methyl-D-erythritol 4-phosphate cytidylyltransferase (291 aa).

Residues 1-23 (MTERDFDTPVETPTVQPAPAQGT) are disordered.

The protein belongs to the IspD/TarI cytidylyltransferase family. IspD subfamily.

The enzyme catalyses 2-C-methyl-D-erythritol 4-phosphate + CTP + H(+) = 4-CDP-2-C-methyl-D-erythritol + diphosphate. It participates in isoprenoid biosynthesis; isopentenyl diphosphate biosynthesis via DXP pathway; isopentenyl diphosphate from 1-deoxy-D-xylulose 5-phosphate: step 2/6. Functionally, catalyzes the formation of 4-diphosphocytidyl-2-C-methyl-D-erythritol from CTP and 2-C-methyl-D-erythritol 4-phosphate (MEP). The protein is 2-C-methyl-D-erythritol 4-phosphate cytidylyltransferase of Bifidobacterium longum subsp. infantis (strain ATCC 15697 / DSM 20088 / JCM 1222 / NCTC 11817 / S12).